Reading from the N-terminus, the 383-residue chain is Homeobox protein SHOOT MERISTEMLESS (383 aa).

Positions 37-58 (HQQHHGHDQQHQHQQQHDGYAY) are disordered. Residues 263-283 (ELKGQLLRKYSGYLGSLKQEF) enclose the ELK domain. Residues 284–347 (MKKRKKGKLP…NQRKRHWKPS (64 aa)) constitute a DNA-binding region (homeobox; TALE-type).

Belongs to the TALE/KNOX homeobox family.

It localises to the nucleus. In terms of biological role, required for shoot apical meristem formation during embryogenesis. Probably binds to the DNA sequence 5'-TGAC-3'. This chain is Homeobox protein SHOOT MERISTEMLESS (STM), found in Brassica oleracea (Wild cabbage).